We begin with the raw amino-acid sequence, 199 residues long: 7-methyl-GTP pyrophosphatase (199 aa).

The active-site Proton acceptor is aspartate 76.

Belongs to the Maf family. YceF subfamily. A divalent metal cation serves as cofactor.

It localises to the cytoplasm. The catalysed reaction is N(7)-methyl-GTP + H2O = N(7)-methyl-GMP + diphosphate + H(+). Nucleoside triphosphate pyrophosphatase that hydrolyzes 7-methyl-GTP (m(7)GTP). May have a dual role in cell division arrest and in preventing the incorporation of modified nucleotides into cellular nucleic acids. The sequence is that of 7-methyl-GTP pyrophosphatase from Mesorhizobium japonicum (strain LMG 29417 / CECT 9101 / MAFF 303099) (Mesorhizobium loti (strain MAFF 303099)).